The sequence spans 612 residues: Sulfite reductase [NADPH] hemoprotein beta-component (612 aa).

The tract at residues 1–26 is disordered; that stretch reads MDDHKPIETPDGPAVDTPGIGARRYE. [4Fe-4S] cluster-binding residues include Cys469, Cys475, Cys514, and Cys518. Position 518 (Cys518) interacts with siroheme.

This sequence belongs to the nitrite and sulfite reductase 4Fe-4S domain family. Alpha(8)-beta(8). The alpha component is a flavoprotein, the beta component is a hemoprotein. The cofactor is siroheme. Requires [4Fe-4S] cluster as cofactor.

The enzyme catalyses hydrogen sulfide + 3 NADP(+) + 3 H2O = sulfite + 3 NADPH + 4 H(+). The protein operates within sulfur metabolism; hydrogen sulfide biosynthesis; hydrogen sulfide from sulfite (NADPH route): step 1/1. In terms of biological role, component of the sulfite reductase complex that catalyzes the 6-electron reduction of sulfite to sulfide. This is one of several activities required for the biosynthesis of L-cysteine from sulfate. This chain is Sulfite reductase [NADPH] hemoprotein beta-component, found in Methylorubrum extorquens (strain PA1) (Methylobacterium extorquens).